A 470-amino-acid polypeptide reads, in one-letter code: UDP-N-acetylmuramate--L-alanine ligase (470 aa).

An ATP-binding site is contributed by 118-124 (GTHGKTT).

This sequence belongs to the MurCDEF family.

It localises to the cytoplasm. It carries out the reaction UDP-N-acetyl-alpha-D-muramate + L-alanine + ATP = UDP-N-acetyl-alpha-D-muramoyl-L-alanine + ADP + phosphate + H(+). Its pathway is cell wall biogenesis; peptidoglycan biosynthesis. In terms of biological role, cell wall formation. This is UDP-N-acetylmuramate--L-alanine ligase from Cereibacter sphaeroides (strain ATCC 17029 / ATH 2.4.9) (Rhodobacter sphaeroides).